The following is a 110-amino-acid chain: Small ribosomal subunit protein uS10m (110 aa).

Belongs to the universal ribosomal protein uS10 family.

The protein resides in the mitochondrion. In Pisum sativum (Garden pea), this protein is Small ribosomal subunit protein uS10m (RPS10).